We begin with the raw amino-acid sequence, 311 residues long: 3'(2'),5'-bisphosphate nucleotidase 1 (311 aa).

Asp-49 acts as the Proton acceptor in catalysis. Mg(2+) contacts are provided by Glu-72, Asp-116, Leu-118, and Asp-119. Thr-121 functions as the Proton acceptor in the catalytic mechanism. Thr-202, His-205, Gly-227, and Lys-231 together coordinate AMP. Asp-254 provides a ligand contact to Mg(2+).

Belongs to the inositol monophosphatase superfamily. It depends on Mg(2+) as a cofactor.

It catalyses the reaction adenosine 3',5'-bisphosphate + H2O = AMP + phosphate. The enzyme catalyses adenosine 2',5'-bisphosphate + H2O = AMP + phosphate. The catalysed reaction is 3'-phosphoadenylyl sulfate + H2O = adenosine 5'-phosphosulfate + phosphate. It carries out the reaction 1D-myo-inositol 1,4-bisphosphate + H2O = 1D-myo-inositol 4-phosphate + phosphate. It catalyses the reaction 1D-myo-inositol 1,3,4-trisphosphate + H2O = 1D-myo-inositol 3,4-bisphosphate + phosphate. Its activity is regulated as follows. Inhibited by Li(+) and Ca(2+), but not by Na(+). Its function is as follows. Phosphatase that converts 3'(2')-phosphoadenosine 5'-phosphate (PAP) to AMP and adenosine 3'-phosphate 5'-phosphosulfate (PAPS) to adenosine 5'-phosphosulfate (APS). Is also able to hydrolyze inositol 1,4-bisphosphate (Ins(1,4)P2) and inositol 1,3,4-trisphosphate (Ins(1,3,4)P3), but is not active on AMP, 3'-AMP, fructose-1,6-bisphosphate, Ins(1)P, Ins(2)P and Ins(1,4,5)P3. Probably prevents the toxic accumulation of PAP, a compound which inhibits a variety of proteins, including PAPS-utilizing enzymes such as sulfotransferases, and RNA processing enzymes. Could also play a role in inositol recycling and phosphoinositide metabolism. This Dictyostelium discoideum (Social amoeba) protein is 3'(2'),5'-bisphosphate nucleotidase 1 (bpnt1).